We begin with the raw amino-acid sequence, 430 residues long: MTGLVMMTKGGGCGGGGKGGRRKSTAEEEEEEEQNQQQLSLVEFLLTALRKSVVSCRVDNRQDDGGVGGGISSAVHHMEIGWPTNVRHITHVTFDRFHGFLGLPHELQVEIPCRVPSASVSVFGVSAESMQCSYDEKGNSVPTILLLMQERLYSQQGLKAEGIFRINPENSQEEHVRDQLNRGIVPENIDVHCLAGLIKAWFRELPSGVLDGLSPEEVLNCNTEDESVELIKQLKPTESALLNWAVDLMADVVEEEESNKMNARNIAMVFAPNMTQMTDPLTALMHAVQVMNLLKTLITKTLAEREENATGSEGYSPSHSSNSQTDSDSDNAQDMEVSCESQATDSECGEEEEVEEVEQHQEHLSRHSTHEDETDIGSLCSIEKCFLNQLNNNAARVSNTSISEDWSPKAFPLVSFTENKSNTLSSSTSD.

Residues 1–36 (MTGLVMMTKGGGCGGGGKGGRRKSTAEEEEEEEQNQ) are disordered. Residues 9–18 (KGGGCGGGGK) are compositionally biased toward gly residues. The CRIB domain occupies 80-93 (IGWPTNVRHITHVT). The Rho-GAP domain maps to 125 to 310 (VSAESMQCSY…TLAEREENAT (186 aa)). The tract at residues 307-372 (ENATGSEGYS…HLSRHSTHED (66 aa)) is disordered. The span at 316–326 (SPSHSSNSQTD) shows a compositional bias: low complexity. Over residues 347 to 356 (ECGEEEEVEE) the composition is skewed to acidic residues. Basic and acidic residues predominate over residues 357 to 371 (VEQHQEHLSRHSTHE).

Homodimerizes via its Rho-GAP domain and forms a tetrameric complex (2:2) with ARAC1/ROP3, ARAC2/ROP7, ARAC4/ROP2, ARAC5/ROP4, ARAC7/ROP9 or ARAC11/ROP1.

In terms of biological role, acts as a GTPase activator for the Rac-type GTPase by converting it to an inactive GDP-bound state. In Arabidopsis thaliana (Mouse-ear cress), this protein is Rho GTPase-activating protein 2 (ROPGAP2).